Here is a 249-residue protein sequence, read N- to C-terminus: 3-deoxy-D-manno-octulosonic acid kinase (249 aa).

D175 is an active-site residue.

This sequence belongs to the protein kinase superfamily. KdkA/RfaP family.

The protein localises to the cell inner membrane. It catalyses the reaction an alpha-Kdo-(2-&gt;6)-lipid IVA + ATP = a 4-O-phospho-alpha-Kdo-(2-&gt;6)-lipid IVA + ADP + H(+). It functions in the pathway bacterial outer membrane biogenesis; LPS core biosynthesis. Functionally, catalyzes the ATP-dependent phosphorylation of the 3-deoxy-D-manno-octulosonic acid (Kdo) residue in Kdo-lipid IV(A) at the 4-OH position. This is 3-deoxy-D-manno-octulosonic acid kinase from Stenotrophomonas maltophilia (strain K279a).